A 94-amino-acid chain; its full sequence is Aspartyl/glutamyl-tRNA(Asn/Gln) amidotransferase subunit C (94 aa).

It belongs to the GatC family. In terms of assembly, heterotrimer of A, B and C subunits.

The catalysed reaction is L-glutamyl-tRNA(Gln) + L-glutamine + ATP + H2O = L-glutaminyl-tRNA(Gln) + L-glutamate + ADP + phosphate + H(+). It catalyses the reaction L-aspartyl-tRNA(Asn) + L-glutamine + ATP + H2O = L-asparaginyl-tRNA(Asn) + L-glutamate + ADP + phosphate + 2 H(+). Its function is as follows. Allows the formation of correctly charged Asn-tRNA(Asn) or Gln-tRNA(Gln) through the transamidation of misacylated Asp-tRNA(Asn) or Glu-tRNA(Gln) in organisms which lack either or both of asparaginyl-tRNA or glutaminyl-tRNA synthetases. The reaction takes place in the presence of glutamine and ATP through an activated phospho-Asp-tRNA(Asn) or phospho-Glu-tRNA(Gln). The polypeptide is Aspartyl/glutamyl-tRNA(Asn/Gln) amidotransferase subunit C (Desulfitobacterium hafniense (strain DSM 10664 / DCB-2)).